Consider the following 372-residue polypeptide: Pre-small/secreted glycoprotein (372 aa).

The first 32 residues, 1-32 (MEGLSLLQLPRDKFRKSSFFVWVIILFQKAFS), serve as a signal peptide directing secretion. Residue N40 is glycosylated (N-linked (GlcNAc...) asparagine; by host). Cystine bridges form between C108–C135 and C121–C147. N-linked (GlcNAc...) asparagine; by host glycosylation is found at N204, N208, N238, N257, and N268. The interval 320–340 (MRHRRELQREESPTGPPGSIR) is disordered.

This sequence belongs to the filoviruses glycoprotein family. In terms of assembly, homodimer; disulfide-linked. The homodimers are linked by two disulfide bonds in a parallel orientation. Monomer. In terms of processing, this precursor is processed into mature sGP and delta-peptide by host furin or furin-like proteases. The cleavage site corresponds to the furin optimal cleavage sequence [KR]-X-[KR]-R. Post-translationally, N-glycosylated. O-glycosylated.

It localises to the secreted. Seems to possess an anti-inflammatory activity as it can reverse the barrier-decreasing effects of TNF alpha. Might therefore contribute to the lack of inflammatory reaction seen during infection in spite the of extensive necrosis and massive virus production. Does not seem to be involved in activation of primary macrophages. Does not seem to interact specifically with neutrophils. Its function is as follows. Viroporin that permeabilizes mammalian cell plasma membranes. It acts by altering permeation of ionic compounds and small molecules. This activity may lead to viral enterotoxic activity. This is Pre-small/secreted glycoprotein (GP) from Sudan ebolavirus (strain Boniface-76) (SEBOV).